The primary structure comprises 375 residues: Probable L-tyrosine/L-aspartate decarboxylase (375 aa).

At Lys-226 the chain carries N6-(pyridoxal phosphate)lysine.

This sequence belongs to the group II decarboxylase family. MfnA subfamily. Requires pyridoxal 5'-phosphate as cofactor.

The catalysed reaction is L-tyrosine + H(+) = tyramine + CO2. It carries out the reaction L-aspartate + H(+) = beta-alanine + CO2. The protein operates within cofactor biosynthesis; methanofuran biosynthesis. Its pathway is cofactor biosynthesis; coenzyme A biosynthesis. In terms of biological role, catalyzes the decarboxylation of L-tyrosine to produce tyramine for methanofuran biosynthesis. Can also catalyze the decarboxylation of L-aspartate to produce beta-alanine for coenzyme A (CoA) biosynthesis. The chain is Probable L-tyrosine/L-aspartate decarboxylase from Methanocella arvoryzae (strain DSM 22066 / NBRC 105507 / MRE50).